The sequence spans 143 residues: MSDNTGAPDVQVETTSVFRADLLKEMESGAGAATASGSDVTPPAGAGMLVVKRGPNAGARFLLDRPTTTAGRHPESDIFLDDVTVSRRHAEFRRQDGSFEVVDVGSLNGTYVNREPRNSEVLSSGDEVQIGKFRLVFIEGPRA.

Phosphothreonine is present on threonine 14. The segment covering 29–38 (GAGAATASGS) has biased composition (low complexity). A disordered region spans residues 29–50 (GAGAATASGSDVTPPAGAGMLV). Residues 68–117 (TTAGRHPESDIFLDDVTVSRRHAEFRRQDGSFEVVDVGSLNGTYVNREPR) enclose the FHA domain.

It is found in the cytoplasm. An essential component of the PknG signaling pathway. When unphosphorylated, it inhibits the activity of 2-oxoglutarate dehydrogenase. When phosphorylated it does not inhibit 2-oxoglutarate dehydrogenase. This chain is Oxoglutarate dehydrogenase inhibitor (odhI), found in Corynebacterium diphtheriae (strain ATCC 700971 / NCTC 13129 / Biotype gravis).